The chain runs to 248 residues: Conoporin-Cn1 (248 aa).

The N-terminal stretch at 1-23 (MGVQFPALKTMVTVFLLLMGNMS) is a signal peptide. The segment at 45–64 (TPGSSLYGVALKDLADTSYN) is N-terminal region. Phosphocholine is bound by residues Gly120, Ser138, Pro140, Tyr167, and Tyr171.

Belongs to the actinoporin family. Conoidea subfamily. Octamer or nonamer in membranes. Monomer in the soluble state. Post-translationally, 9 isoforms are detected in the injectable venom, mainly corresponding to different oxidative states. As to expression, expressed by the venom duct.

The protein resides in the secreted. Its subcellular location is the nematocyst. It is found in the target cell membrane. In terms of biological role, pore-forming protein that forms pores of around 1 nm and causes cardiac stimulation and cytolysis. The chain is Conoporin-Cn1 from Conus consors (Singed cone).